The sequence spans 65 residues: Putative antitoxin MJECL31 (65 aa).

Belongs to the UPF0165 family.

In terms of biological role, possibly the antitoxin component of a type II toxin-antitoxin (TA) system. The polypeptide is Putative antitoxin MJECL31 (Methanocaldococcus jannaschii (strain ATCC 43067 / DSM 2661 / JAL-1 / JCM 10045 / NBRC 100440) (Methanococcus jannaschii)).